Consider the following 715-residue polypeptide: Fatty acid oxidation complex subunit alpha (715 aa).

The segment at 1-190 (MTTTSAFMLN…KAGLVDDVVP (190 aa)) is enoyl-CoA hydratase. Residues 306–715 (GPLNSVGILG…WTNGETDQGN (410 aa)) form a 3-hydroxyacyl-CoA dehydrogenase region.

It in the N-terminal section; belongs to the enoyl-CoA hydratase/isomerase family. The protein in the central section; belongs to the 3-hydroxyacyl-CoA dehydrogenase family. Heterotetramer of two alpha chains (FadJ) and two beta chains (FadI).

It is found in the cytoplasm. The enzyme catalyses a (3S)-3-hydroxyacyl-CoA = a (2E)-enoyl-CoA + H2O. The catalysed reaction is a 4-saturated-(3S)-3-hydroxyacyl-CoA = a (3E)-enoyl-CoA + H2O. It catalyses the reaction a (3S)-3-hydroxyacyl-CoA + NAD(+) = a 3-oxoacyl-CoA + NADH + H(+). It carries out the reaction (3S)-3-hydroxybutanoyl-CoA = (3R)-3-hydroxybutanoyl-CoA. It functions in the pathway lipid metabolism; fatty acid beta-oxidation. In terms of biological role, catalyzes the formation of a hydroxyacyl-CoA by addition of water on enoyl-CoA. Also exhibits 3-hydroxyacyl-CoA epimerase and 3-hydroxyacyl-CoA dehydrogenase activities. In Salmonella gallinarum (strain 287/91 / NCTC 13346), this protein is Fatty acid oxidation complex subunit alpha.